Here is a 123-residue protein sequence, read N- to C-terminus: Small ribosomal subunit protein uS12c (123 aa).

The tract at residues 9 to 31 (RNKRQAAENKTKSPALQRSPQRR) is disordered.

This sequence belongs to the universal ribosomal protein uS12 family. Part of the 30S ribosomal subunit.

It is found in the plastid. The protein resides in the chloroplast. Functionally, with S4 and S5 plays an important role in translational accuracy. Located at the interface of the 30S and 50S subunits. The sequence is that of Small ribosomal subunit protein uS12c (rps12) from Spirogyra maxima (Green alga).